Consider the following 482-residue polypeptide: 2-succinylbenzoate--CoA ligase (482 aa).

It belongs to the ATP-dependent AMP-binding enzyme family. MenE subfamily.

It catalyses the reaction 2-succinylbenzoate + ATP + CoA = 2-succinylbenzoyl-CoA + AMP + diphosphate. The protein operates within quinol/quinone metabolism; 1,4-dihydroxy-2-naphthoate biosynthesis; 1,4-dihydroxy-2-naphthoate from chorismate: step 5/7. It functions in the pathway quinol/quinone metabolism; menaquinone biosynthesis. Functionally, converts 2-succinylbenzoate (OSB) to 2-succinylbenzoyl-CoA (OSB-CoA). The protein is 2-succinylbenzoate--CoA ligase of Bacillus anthracis (strain A0248).